Reading from the N-terminus, the 57-residue chain is Large ribosomal subunit protein bL32A (57 aa).

Belongs to the bacterial ribosomal protein bL32 family.

The chain is Large ribosomal subunit protein bL32A (rpmF1) from Streptomyces coelicolor (strain ATCC BAA-471 / A3(2) / M145).